The following is a 663-amino-acid chain: MNRKHLANAIRALSMDGVQQANSGHPGAPMGMADIAEVLWRSHLNHNPANPEWADRDRFILSNGHGSMLIYSLLHLSGYELSIDDLKNFRQLHSKTPGHPEYGYAPGVETTTGPLGQGITNAVGMAMAEKALAAQFNKEGHDIVDHFTYTFMGDGCLMEGISHEACSLAGTLGLGKLIAFWDDNGISIDGEVEGWFSDDTPKRFEAYGWHVIPAVDGHDSDAINAAIEAAKADPRPTLICTKTIIGFGSPNKQGTHDCHGAPLGADEIKAAKAQLGWEHGAFEIPQEVYAEWDAKETGAAKEASWNEKFAAYEAAYPELAAEFTRRVNGDLPKEWEEKASAIIADLQANPANIASRKASQNALEAFGAMLPEFMGGSADLAPSNLTMWSGSKSLEANDFSGNYIHYGVREFGMTAIMNGIALHGGFVPYGATFLMFMEYARNAMRMAALMKVQNIQVYTHDSIGLGEDGPTHQPVEQIASLRLTPNMSTWRPCDQVESAVAWKLAIERKDGPSALIFSRQNLAQQERDAKQLANIAKGGYILKDCEGQPELILIATGSEVELAIEAAAQLTAEGKAVRVVSMPSTDAFDKQDEAYREAVLPSAVTKRIAIEAGIADFWYKYVGFGGKIIGMTTFGESAPADELFKMFGFTTENVVNTAKELLA.

Position 25 (His25) interacts with substrate. Thiamine diphosphate is bound by residues His65 and Gly113 to Leu115. Residue Asp154 coordinates Mg(2+). Positions 155 and 184 each coordinate thiamine diphosphate. 2 residues coordinate Mg(2+): Asn184 and Ile186. 3 residues coordinate substrate: His259, Arg356, and Ser383. His259 provides a ligand contact to thiamine diphosphate. Glu410 functions as the Proton donor in the catalytic mechanism. A thiamine diphosphate-binding site is contributed by Phe436. Residues His460, Asp468, and Arg519 each coordinate substrate.

The protein belongs to the transketolase family. As to quaternary structure, homodimer. Mg(2+) serves as cofactor. The cofactor is Ca(2+). Requires Mn(2+) as cofactor. Co(2+) is required as a cofactor. It depends on thiamine diphosphate as a cofactor.

It carries out the reaction D-sedoheptulose 7-phosphate + D-glyceraldehyde 3-phosphate = aldehydo-D-ribose 5-phosphate + D-xylulose 5-phosphate. Catalyzes the transfer of a two-carbon ketol group from a ketose donor to an aldose acceptor, via a covalent intermediate with the cofactor thiamine pyrophosphate. The sequence is that of Transketolase 2 (tkt2) from Aliivibrio fischeri (strain ATCC 700601 / ES114) (Vibrio fischeri).